Here is a 1805-residue protein sequence, read N- to C-terminus: Obscurin-like protein 1 (1805 aa).

The residue at position 10 (Ser-10) is a Phosphoserine. Residues Pro-12–Thr-100 form the Ig-like 1 domain. The segment at Phe-17 to Arg-19 is interaction with TTN. Cys-33 and Cys-84 are disulfide-bonded. The interval Arg-85–Tyr-94 is interaction with TTN. The span at Pro-104–Gly-122 shows a compositional bias: pro residues. Residues Pro-104–Leu-131 are disordered. 3 Ig-like domains span residues Pro-128 to Gln-225, Pro-240 to Ser-330, and Pro-339 to Thr-425. Disulfide bonds link Cys-149–Cys-209, Cys-267–Cys-319, and Cys-362–Cys-412. Positions Pro-517–Thr-615 constitute a Fibronectin type-III domain. 10 Ig-like domains span residues Pro-720–Thr-800, Pro-804–Thr-891, Pro-902–Thr-982, Pro-986–Thr-1075, Pro-1078–Ser-1165, Pro-1176–Gln-1261, Pro-1266–His-1351, Thr-1355–Ser-1442, Pro-1536–Ser-1628, and Pro-1702–Gln-1798. Intrachain disulfides connect Cys-738-Cys-788, Cys-829-Cys-879, Cys-920-Cys-970, Cys-1011-Cys-1061, Cys-1103-Cys-1153, and Cys-1195-Cys-1245. Cysteines 1558 and 1608 form a disulfide.

Component of the 3M complex, composed of core components CUL7, CCDC8 and OBSL1. Interacts with CCDC8. Interacts with CUL7; the interaction is direct. Interacts with FBXW8. Interacts (via N-terminal Ig-like domain) with TTN/titin (via C-terminal Ig-like domain); the interaction is direct. Expressed in granule neurons, with levels decreasing with neuronal maturation.

Its subcellular location is the cytoplasm. It localises to the perinuclear region. It is found in the golgi apparatus. Functionally, core component of the 3M complex, a complex required to regulate microtubule dynamics and genome integrity. It is unclear how the 3M complex regulates microtubules, it could act by controlling the level of a microtubule stabilizer. Acts as a regulator of the Cul7-RING(FBXW8) ubiquitin-protein ligase, playing a critical role in the ubiquitin ligase pathway that regulates Golgi morphogenesis and dendrite patterning in brain. Required to localize CUL7 to the Golgi apparatus in neurons. This chain is Obscurin-like protein 1 (Obsl1), found in Rattus norvegicus (Rat).